A 173-amino-acid chain; its full sequence is 3-hydroxydecanoyl-[acyl-carrier-protein] dehydratase (173 aa).

His71 is a catalytic residue.

It belongs to the thioester dehydratase family. FabA subfamily. As to quaternary structure, homodimer.

The protein localises to the cytoplasm. The catalysed reaction is a (3R)-hydroxyacyl-[ACP] = a (2E)-enoyl-[ACP] + H2O. It catalyses the reaction (3R)-hydroxydecanoyl-[ACP] = (2E)-decenoyl-[ACP] + H2O. The enzyme catalyses (2E)-decenoyl-[ACP] = (3Z)-decenoyl-[ACP]. Its pathway is lipid metabolism; fatty acid biosynthesis. Functionally, necessary for the introduction of cis unsaturation into fatty acids. Catalyzes the dehydration of (3R)-3-hydroxydecanoyl-ACP to E-(2)-decenoyl-ACP and then its isomerization to Z-(3)-decenoyl-ACP. Can catalyze the dehydratase reaction for beta-hydroxyacyl-ACPs with saturated chain lengths up to 16:0, being most active on intermediate chain length. The protein is 3-hydroxydecanoyl-[acyl-carrier-protein] dehydratase of Baumannia cicadellinicola subsp. Homalodisca coagulata.